The sequence spans 343 residues: Ubiquitin carboxyl-terminal hydrolase isozyme L5 (343 aa).

The region spanning 6 to 218 (GWCTIESDPG…IRFNLMAVIK (213 aa)) is the UCH catalytic domain. Catalysis depends on C83, which acts as the Nucleophile. Residue H157 is the Proton donor of the active site. Residues 242–266 (LSELNSGSGGDNKEESGGATPTTKE) form a disordered region. Positions 306–334 (NFTPLILNLIKGLAEKDNLQPLIQKAKDQ) constitute a ULD domain.

This sequence belongs to the peptidase C12 family. As to quaternary structure, component of the 19S (PA700) regulatory complex of the 26S proteasome.

The protein localises to the cytoplasm. It is found in the nucleus. It catalyses the reaction Thiol-dependent hydrolysis of ester, thioester, amide, peptide and isopeptide bonds formed by the C-terminal Gly of ubiquitin (a 76-residue protein attached to proteins as an intracellular targeting signal).. Its function is as follows. Protease that specifically cleaves 'Lys-48'-linked polyubiquitin chains. Deubiquitinating enzyme associated with the 19S regulatory subunit of the 26S proteasome. The polypeptide is Ubiquitin carboxyl-terminal hydrolase isozyme L5 (uch2) (Dictyostelium discoideum (Social amoeba)).